Here is a 610-residue protein sequence, read N- to C-terminus: UvrABC system protein C (610 aa).

In terms of domain architecture, GIY-YIG spans 16 to 94 (SQPGVYRMYD…IKLYQPRYNV (79 aa)). Residues 204 to 239 (DQVLTQLIARMEKASQDLAFEEAARIRDQIQAVRRV) enclose the UVR domain.

This sequence belongs to the UvrC family. As to quaternary structure, interacts with UvrB in an incision complex.

The protein localises to the cytoplasm. In terms of biological role, the UvrABC repair system catalyzes the recognition and processing of DNA lesions. UvrC both incises the 5' and 3' sides of the lesion. The N-terminal half is responsible for the 3' incision and the C-terminal half is responsible for the 5' incision. This is UvrABC system protein C from Salmonella typhi.